The following is a 213-amino-acid chain: uncharacterized protein (213 aa).

Active-site charge relay system residues include S114, D162, and H194.

The protein belongs to the AB hydrolase superfamily. AB hydrolase 2 family.

This is an uncharacterized protein from Rickettsia bellii (strain RML369-C).